A 244-amino-acid polypeptide reads, in one-letter code: 5-oxoprolinase subunit A (244 aa).

This sequence belongs to the LamB/PxpA family. In terms of assembly, forms a complex composed of PxpA, PxpB and PxpC.

The catalysed reaction is 5-oxo-L-proline + ATP + 2 H2O = L-glutamate + ADP + phosphate + H(+). Functionally, catalyzes the cleavage of 5-oxoproline to form L-glutamate coupled to the hydrolysis of ATP to ADP and inorganic phosphate. The sequence is that of 5-oxoprolinase subunit A from Salmonella newport (strain SL254).